The primary structure comprises 312 residues: MNITFLGTSSGVPSLTRNVSSLALKLSQSSEVWLFDCGEGTQHQIMKSNIKSSQIKKIFITHMHGDHIYGLPGLLATLGLSGNSEGIQIYGPSGLRSFINSSLKSSFCKLSFPLNFVEVENFASENKILFENNKIKVNCACLKHKIPAYGYRVSEKDKPGIFDIKKAESLKIAPGPIYSELQQGKKVVLADGRTFDGKEFCGPPRKGESFVYCTDTVFSESAVSLSKNADLLVHESTFSVEDESMAYEKLHSTTIMAAKTALLSNTKKLIITHLSPRYTNKNAITPSDLLKEAQKVFPNTYLAKDFLTAEIK.

Residues histidine 62, histidine 64, aspartate 66, histidine 67, histidine 144, aspartate 215, and histidine 273 each contribute to the Zn(2+) site. Residue aspartate 66 is the Proton acceptor of the active site.

The protein belongs to the RNase Z family. Homodimer. Zn(2+) serves as cofactor.

It catalyses the reaction Endonucleolytic cleavage of RNA, removing extra 3' nucleotides from tRNA precursor, generating 3' termini of tRNAs. A 3'-hydroxy group is left at the tRNA terminus and a 5'-phosphoryl group is left at the trailer molecule.. Functionally, zinc phosphodiesterase, which displays some tRNA 3'-processing endonuclease activity. Probably involved in tRNA maturation, by removing a 3'-trailer from precursor tRNA. The protein is Ribonuclease Z of Prochlorococcus marinus (strain MIT 9301).